The following is a 250-amino-acid chain: Kv channel-interacting protein 4 (250 aa).

The KIS stretch occupies residues Asn2 to Ser44. 2 positions are modified to phosphoserine: Ser17 and Ser56. The EF-hand 1; degenerate domain maps to Leu61–Pro117. 3 EF-hand domains span residues Asp120 to Gly155, Thr156 to Met191, and Ala204 to Ile239. Ca(2+)-binding residues include Asp133, Asp135, Asn137, Asp144, Asp169, Asn171, Asp173, Tyr175, Glu180, Asp217, Asn219, Asp221, and Glu228. The interaction with KCND2 stretch occupies residues Glu237 to Ile250.

It belongs to the recoverin family. Component of heteromultimeric potassium channels. Identified in potassium channel complexes containing KCND1, KCND2, KCND3, KCNIP1, KCNIP2, KCNIP3, KCNIP4, DPP6 and DPP10. Interacts with the C-terminus of PSEN2 and probably PSEN1. Interacts with KCND2 and KCND3. Expressed in brain. Highly expressed by neurons in layers II-IV of cortex and in hippocampus, thalamus and the Purkinje cell layer of the cerebellum.

It is found in the cell membrane. It localises to the cytoplasm. The protein localises to the peroxisome. Regulatory subunit of Kv4/D (Shal)-type voltage-gated rapidly inactivating A-type potassium channels, such as KCND2/Kv4.2 and KCND3/Kv4.3. Modulates channel expression at the cell membrane, gating characteristics, inactivation kinetics and rate of recovery from inactivation in a calcium-dependent and isoform-specific manner. The protein is Kv channel-interacting protein 4 (Kcnip4) of Mus musculus (Mouse).